Consider the following 396-residue polypeptide: Tryptophan synthase beta chain (396 aa).

Residue lysine 86 is modified to N6-(pyridoxal phosphate)lysine.

Belongs to the TrpB family. Tetramer of two alpha and two beta chains. Pyridoxal 5'-phosphate serves as cofactor.

It catalyses the reaction (1S,2R)-1-C-(indol-3-yl)glycerol 3-phosphate + L-serine = D-glyceraldehyde 3-phosphate + L-tryptophan + H2O. It participates in amino-acid biosynthesis; L-tryptophan biosynthesis; L-tryptophan from chorismate: step 5/5. Its function is as follows. The beta subunit is responsible for the synthesis of L-tryptophan from indole and L-serine. The protein is Tryptophan synthase beta chain of Vibrio cholerae serotype O1 (strain ATCC 39315 / El Tor Inaba N16961).